A 217-amino-acid chain; its full sequence is Putative peroxiredoxin Q, chloroplastic (217 aa).

The N-terminal 66 residues, 1-66 (MAFAVSTACR…PSTTGRNRIV (66 aa)), are a transit peptide targeting the chloroplast. The 148-residue stretch at 70 to 217 (VSKGSAAPNF…GETLKILQSL (148 aa)) folds into the Thioredoxin domain. The active-site Cysteine sulfenic acid (-SOH) intermediate is cysteine 112. Cysteine 112 and cysteine 117 form a disulfide bridge.

It belongs to the peroxiredoxin family. BCP/PrxQ subfamily. In terms of assembly, monomer.

The protein resides in the plastid. It localises to the chloroplast thylakoid lumen. The catalysed reaction is a hydroperoxide + [thioredoxin]-dithiol = an alcohol + [thioredoxin]-disulfide + H2O. In terms of biological role, thiol-specific peroxidase that catalyzes the reduction of hydrogen peroxide and organic hydroperoxides to water and alcohols, respectively. Plays a role in cell protection against oxidative stress by detoxifying peroxides. The polypeptide is Putative peroxiredoxin Q, chloroplastic (Oryza sativa subsp. indica (Rice)).